The chain runs to 422 residues: 5'-deoxyadenosine deaminase (422 aa).

2 residues coordinate Zn(2+): histidine 57 and histidine 59. 2 residues coordinate substrate: glutamate 86 and histidine 178. A Zn(2+)-binding site is contributed by histidine 205. Substrate contacts are provided by glutamate 208 and aspartate 294. Residue aspartate 294 coordinates Zn(2+).

The protein belongs to the metallo-dependent hydrolases superfamily. MTA/SAH deaminase family. As to quaternary structure, homotetramer. It depends on Zn(2+) as a cofactor.

The catalysed reaction is 5'-deoxyadenosine + H2O + H(+) = 5'-deoxyinosine + NH4(+). The enzyme catalyses S-adenosyl-L-homocysteine + H2O + H(+) = S-inosyl-L-homocysteine + NH4(+). It catalyses the reaction S-methyl-5'-thioadenosine + H2O + H(+) = S-methyl-5'-thioinosine + NH4(+). It carries out the reaction adenosine + H2O + H(+) = inosine + NH4(+). It participates in amino-acid biosynthesis; S-adenosyl-L-methionine biosynthesis. Functionally, catalyzes the deamination of three SAM-derived enzymatic products, namely 5'-deoxyadenosine, S-adenosyl-L-homocysteine, and 5'-methylthioadenosine, to produce the inosine analogs. Can also deaminate adenosine. The preferred substrate for this enzyme is 5'-deoxyadenosine, but all these substrates are efficiently deaminated. Likely functions in a S-adenosyl-L-methionine (SAM) recycling pathway from S-adenosyl-L-homocysteine (SAH) produced from SAM-dependent methylation reactions. May also be involved in the recycling of 5'-deoxyadenosine, whereupon the 5'-deoxyribose moiety of 5'-deoxyinosine is further metabolized to deoxyhexoses used for the biosynthesis of aromatic amino acids in methanogens. The chain is 5'-deoxyadenosine deaminase from Methanococcus maripaludis (strain C6 / ATCC BAA-1332).